The sequence spans 462 residues: Hyaluronidase-1 (462 aa).

The signal sequence occupies residues 1–52 (MLGLTQHAQKVWRMKPFSPEVSPGSSPATAGHLLRISTLFLTLLELAQVCRG). 2 disulfide bridges follow: cysteine 71-cysteine 361 and cysteine 235-cysteine 249. N-linked (GlcNAc...) asparagine glycosylation is found at asparagine 98 and asparagine 127. Glutamate 159 functions as the Proton donor in the catalytic mechanism. N-linked (GlcNAc...) asparagine glycosylation is found at asparagine 244, asparagine 265, and asparagine 378. 3 disulfides stabilise this stretch: cysteine 386-cysteine 397, cysteine 391-cysteine 446, and cysteine 448-cysteine 457. In terms of domain architecture, EGF-like spans 446 to 457 (CRCYRGWRGKWC).

This sequence belongs to the glycosyl hydrolase 56 family. Highly expressed in liver, kidney, lung and skin.

It is found in the secreted. The protein resides in the lysosome. It carries out the reaction Random hydrolysis of (1-&gt;4)-linkages between N-acetyl-beta-D-glucosamine and D-glucuronate residues in hyaluronate.. Functionally, may have a role in promoting tumor progression. May block the TGFB1-enhanced cell growth. The polypeptide is Hyaluronidase-1 (Hyal1) (Mus musculus (Mouse)).